We begin with the raw amino-acid sequence, 289 residues long: Pantothenate synthetase (289 aa).

An ATP-binding site is contributed by 28–35 (MGCLHEGH). His-35 acts as the Proton donor in catalysis. Gln-59 contacts (R)-pantoate. Beta-alanine is bound at residue Gln-59. 147-150 (GLKD) is a binding site for ATP. Gln-153 serves as a coordination point for (R)-pantoate. ATP-binding positions include Val-176 and 184–187 (MSSR).

This sequence belongs to the pantothenate synthetase family. Homodimer.

Its subcellular location is the cytoplasm. It carries out the reaction (R)-pantoate + beta-alanine + ATP = (R)-pantothenate + AMP + diphosphate + H(+). It functions in the pathway cofactor biosynthesis; (R)-pantothenate biosynthesis; (R)-pantothenate from (R)-pantoate and beta-alanine: step 1/1. Its function is as follows. Catalyzes the condensation of pantoate with beta-alanine in an ATP-dependent reaction via a pantoyl-adenylate intermediate. In Magnetococcus marinus (strain ATCC BAA-1437 / JCM 17883 / MC-1), this protein is Pantothenate synthetase.